The chain runs to 357 residues: UPF0283 membrane protein HS_0596 (357 aa).

3 helical membrane passes run 67 to 87 (LMAT…QWLV), 96 to 116 (IAFV…GAII), and 213 to 233 (AVES…MFFI).

The protein belongs to the UPF0283 family.

Its subcellular location is the cell inner membrane. In Histophilus somni (strain 129Pt) (Haemophilus somnus), this protein is UPF0283 membrane protein HS_0596.